The primary structure comprises 272 residues: Phosphoglycolate phosphatase (272 aa).

The Nucleophile role is filled by aspartate 19. Positions 19, 21, and 182 each coordinate Mg(2+).

This sequence belongs to the HAD-like hydrolase superfamily. CbbY/CbbZ/Gph/YieH family. Mg(2+) is required as a cofactor.

It catalyses the reaction 2-phosphoglycolate + H2O = glycolate + phosphate. The protein operates within organic acid metabolism; glycolate biosynthesis; glycolate from 2-phosphoglycolate: step 1/1. Its function is as follows. Specifically catalyzes the dephosphorylation of 2-phosphoglycolate. Is involved in the dissimilation of the intracellular 2-phosphoglycolate formed during the DNA repair of 3'-phosphoglycolate ends, a major class of DNA lesions induced by oxidative stress. In Pseudomonas fluorescens (strain ATCC BAA-477 / NRRL B-23932 / Pf-5), this protein is Phosphoglycolate phosphatase.